A 208-amino-acid chain; its full sequence is Outer-membrane lipoprotein carrier protein (208 aa).

Positions 1-25 are cleaved as a signal peptide; sequence MKKRFSAKLFSALVLSISFFSAANA.

Belongs to the LolA family. As to quaternary structure, monomer.

The protein localises to the periplasm. Its function is as follows. Participates in the translocation of lipoproteins from the inner membrane to the outer membrane. Only forms a complex with a lipoprotein if the residue after the N-terminal Cys is not an aspartate (The Asp acts as a targeting signal to indicate that the lipoprotein should stay in the inner membrane). This is Outer-membrane lipoprotein carrier protein from Vibrio parahaemolyticus serotype O3:K6 (strain RIMD 2210633).